The primary structure comprises 88 residues: Small ribosomal subunit protein bS20 (88 aa).

This sequence belongs to the bacterial ribosomal protein bS20 family.

Binds directly to 16S ribosomal RNA. The polypeptide is Small ribosomal subunit protein bS20 (Heliobacterium modesticaldum (strain ATCC 51547 / Ice1)).